A 321-amino-acid polypeptide reads, in one-letter code: NADH-ubiquinone oxidoreductase chain 1 (321 aa).

8 helical membrane-spanning segments follow: residues I7–M27, I73–I93, L104–G124, V148–L168, H175–A195, F227–I247, E256–I276, and L297–I317.

Belongs to the complex I subunit 1 family.

Its subcellular location is the mitochondrion inner membrane. It catalyses the reaction a ubiquinone + NADH + 5 H(+)(in) = a ubiquinol + NAD(+) + 4 H(+)(out). Its function is as follows. Core subunit of the mitochondrial membrane respiratory chain NADH dehydrogenase (Complex I) that is believed to belong to the minimal assembly required for catalysis. Complex I functions in the transfer of electrons from NADH to the respiratory chain. The immediate electron acceptor for the enzyme is believed to be ubiquinone. This is NADH-ubiquinone oxidoreductase chain 1 (MT-ND1) from Varanus dumerilii (Dumeril's monitor).